We begin with the raw amino-acid sequence, 215 residues long: Interleukin-12 subunit alpha (215 aa).

The signal sequence occupies residues 1–22 (MCSSRCLLFLATLAFLIHLSLA). Intrachain disulfides connect cysteine 33/cysteine 106, cysteine 60/cysteine 192, and cysteine 81/cysteine 119. N-linked (GlcNAc...) asparagine glycosylation is present at asparagine 89.

It belongs to the IL-6 superfamily. Heterodimer with IL12B; disulfide-linked. This heterodimer is known as interleukin IL-12. Heterodimer with EBI3/IL27B; not disulfide-linked. This heterodimer is known as interleukin IL-35. Interacts with NBR1; this interaction promotes IL-12 secretion.

It is found in the secreted. In terms of biological role, heterodimerizes with IL12B to form the IL-12 cytokine or with EBI3/IL27B to form the IL-35 cytokine. IL-12 is primarily produced by professional antigen-presenting cells (APCs) such as B-cells and dendritic cells (DCs) as well as macrophages and granulocytes and regulates T-cell and natural killer-cell responses, induces the production of interferon-gamma (IFN-gamma), favors the differentiation of T-helper 1 (Th1) cells and is an important link between innate resistance and adaptive immunity. Mechanistically, exerts its biological effects through a receptor composed of IL12R1 and IL12R2 subunits. Binding to the receptor results in the rapid tyrosine phosphorylation of a number of cellular substrates including the JAK family kinases TYK2 and JAK2. In turn, recruited STAT4 gets phosphorylated and translocates to the nucleus where it regulates cytokine/growth factor responsive genes. As part of IL-35, plays essential roles in maintaining the immune homeostasis of the liver microenvironment and also functions as an immune-suppressive cytokine. Mediates biological events through unconventional receptors composed of IL12RB2 and gp130/IL6ST heterodimers or homodimers. Signaling requires the transcription factors STAT1 and STAT4, which form a unique heterodimer that binds to distinct DNA sites. In Sigmodon hispidus (Hispid cotton rat), this protein is Interleukin-12 subunit alpha (IL12A).